The chain runs to 267 residues: 27 kDa core protein (267 aa).

It belongs to the chordopoxvirinae D3 family.

The protein localises to the virion. In terms of biological role, late protein which is part of a large complex required for early virion morphogenesis. This complex participates in the formation of virosomes and the incorporation of virosomal contents into nascent immature virions. The chain is 27 kDa core protein from Canarypox virus (CNPV).